The chain runs to 527 residues: Acid-sensing ion channel 1 (527 aa).

Topologically, residues 1-49 are cytoplasmic; sequence MMDLKVDEEEVDSGQPVSIQAFASSSTLHGISHIFSYERLSLKRVVWAL. A helical transmembrane segment spans residues 50–71; sequence CFMGSLALLALVCTNRIQYYFL. Residues 72–424 are Extracellular-facing; the sequence is YPHVTKLDEV…NYETIEQKKA (353 aa). Intrachain disulfides connect cysteine 94–cysteine 195, cysteine 173–cysteine 180, cysteine 291–cysteine 366, cysteine 309–cysteine 362, cysteine 313–cysteine 360, cysteine 322–cysteine 344, and cysteine 324–cysteine 336. 2 N-linked (GlcNAc...) asparagine glycosylation sites follow: asparagine 367 and asparagine 394. A discontinuously helical membrane pass occupies residues 425 to 454; the sequence is YEVAGLLGDIGGQMGLFIGASILTVLELFD. The short motif at 443–445 is the GAS motif; ion selectivity filter element; sequence GAS. Over 455–527 the chain is Cytoplasmic; it reads YAYEVIKHRL…ARGTFEDFTC (73 aa).

Belongs to the amiloride-sensitive sodium channel (TC 1.A.6) family. ASIC1 subfamily. In terms of assembly, homotrimer. Heterotrimer; with other ASIC proteins producing channel with different properties.

It is found in the cell membrane. The protein localises to the postsynaptic cell membrane. Its subcellular location is the cell projection. It localises to the dendrite. The catalysed reaction is Na(+)(in) = Na(+)(out). It catalyses the reaction Li(+)(in) = Li(+)(out). The enzyme catalyses K(+)(in) = K(+)(out). It carries out the reaction Ca(2+)(in) = Ca(2+)(out). With respect to regulation, inhibited by the diuretic drug amiloride. Inhibited by Cs(1+) ions. Inhibited by the spider venom psalmotoxin-1; this locks the channel into its desensitized conformation. Channel activity is increased by the heterodimeric snake venom neurotoxin composed of MitTx-alpha and MitTx-beta; this slows channel closure and increases the magnitude of the steady-state current that is triggered by low pH. In terms of biological role, forms voltage-independent, pH-gated trimeric sodium channels that act as postsynaptic excitatory receptors in the nervous system, playing a crucial role in regulating synaptic plasticity, learning, and memory. Upon extracellular pH drop this channel elicits transient, fast activating, and completely desensitizing inward currents. Displays high selectivity for sodium ions but can also permit the permeation of other cations. Regulates more or less directly intracellular calcium concentration and CaMKII phosphorylation, and thereby the density of dendritic spines. Modulates neuronal activity in the circuits underlying innate fear. The polypeptide is Acid-sensing ion channel 1 (Gallus gallus (Chicken)).